We begin with the raw amino-acid sequence, 610 residues long: Glutamine--fructose-6-phosphate aminotransferase [isomerizing] (610 aa).

Catalysis depends on Cys2, which acts as the Nucleophile; for GATase activity. In terms of domain architecture, Glutamine amidotransferase type-2 spans 2 to 218 (CGIVGAVAQR…EGDVAEITRR (217 aa)). SIS domains follow at residues 286 to 426 (AADI…EQGR) and 459 to 600 (LATD…VDQP). Lys605 (for Fru-6P isomerization activity) is an active-site residue.

As to quaternary structure, homodimer.

The protein resides in the cytoplasm. It carries out the reaction D-fructose 6-phosphate + L-glutamine = D-glucosamine 6-phosphate + L-glutamate. In terms of biological role, catalyzes the first step in hexosamine metabolism, converting fructose-6P into glucosamine-6P using glutamine as a nitrogen source. The chain is Glutamine--fructose-6-phosphate aminotransferase [isomerizing] from Vibrio parahaemolyticus serotype O3:K6 (strain RIMD 2210633).